Here is a 72-residue protein sequence, read N- to C-terminus: MSKQDVIEFDGEVIETLPNTMFKVRLENGHEILAHISGRMRKNYIRILAGDKVKVELTPYDLTKGRITYRGK.

The S1-like domain occupies 1-72 (MSKQDVIEFD…TKGRITYRGK (72 aa)).

Belongs to the IF-1 family. Component of the 30S ribosomal translation pre-initiation complex which assembles on the 30S ribosome in the order IF-2 and IF-3, IF-1 and N-formylmethionyl-tRNA(fMet); mRNA recruitment can occur at any time during PIC assembly.

The protein localises to the cytoplasm. Functionally, one of the essential components for the initiation of protein synthesis. Stabilizes the binding of IF-2 and IF-3 on the 30S subunit to which N-formylmethionyl-tRNA(fMet) subsequently binds. Helps modulate mRNA selection, yielding the 30S pre-initiation complex (PIC). Upon addition of the 50S ribosomal subunit IF-1, IF-2 and IF-3 are released leaving the mature 70S translation initiation complex. The chain is Translation initiation factor IF-1 from Hydrogenovibrio crunogenus (strain DSM 25203 / XCL-2) (Thiomicrospira crunogena).